We begin with the raw amino-acid sequence, 453 residues long: MNIVILAAGTGKRMRSALPKVLHPLAGRPLLSHVIDTARALAPSRLVVVIGHGAERVRAAVAAPDVQFAVQEQQLGTGHAVRQALPLLDPSQPTLVLYGDVPLTRAATLRRLADAATDARYGVLTVTLDDPTGYGRIVRDQAGCVTRIVEQKDASADELKIAEINTGIVVAPTAQLSMWLGALGNDNAQGEYYLTDVVEQAIEAGFEIVTTQPDDEWETLGVNSKAQLAELERIHQRKLAEALLADGVTLADPARIDVRGKLTCGRDVSIDVNCVFEGDVTLADGVTIGANCVIRNAAIAAGARVDAFSHLDGATLGANTVVGPYARLRPGAVLADDAHVGNFVEVKNATLGHGSKANHLTYLGDADIGARVNVGAGTITCNYDGANKFRTVIEDDVFVGSDTQFVAPVRVGRGVTVAAGTTVWKDVAEGMLVLNDKTQTAKSGYVRPVKKKS.

The segment at Met1–Lys225 is pyrophosphorylase. UDP-N-acetyl-alpha-D-glucosamine contacts are provided by residues Leu6–Gly9, Lys20, Gln71, Gly76–Thr77, Tyr98–Asp100, Gly135, Glu150, Asn165, and Asn223. Asp100 lines the Mg(2+) pocket. A Mg(2+)-binding site is contributed by Asn223. The tract at residues Ala226–Asp246 is linker. Residues Gly247–Ser453 form an N-acetyltransferase region. Positions 329 and 347 each coordinate UDP-N-acetyl-alpha-D-glucosamine. Catalysis depends on His359, which acts as the Proton acceptor. Tyr362 and Asn373 together coordinate UDP-N-acetyl-alpha-D-glucosamine. Acetyl-CoA is bound by residues Ala376, Asn382–Tyr383, Ser401, and Ala419.

The protein in the N-terminal section; belongs to the N-acetylglucosamine-1-phosphate uridyltransferase family. This sequence in the C-terminal section; belongs to the transferase hexapeptide repeat family. Homotrimer. It depends on Mg(2+) as a cofactor.

Its subcellular location is the cytoplasm. It catalyses the reaction alpha-D-glucosamine 1-phosphate + acetyl-CoA = N-acetyl-alpha-D-glucosamine 1-phosphate + CoA + H(+). It carries out the reaction N-acetyl-alpha-D-glucosamine 1-phosphate + UTP + H(+) = UDP-N-acetyl-alpha-D-glucosamine + diphosphate. It participates in nucleotide-sugar biosynthesis; UDP-N-acetyl-alpha-D-glucosamine biosynthesis; N-acetyl-alpha-D-glucosamine 1-phosphate from alpha-D-glucosamine 6-phosphate (route II): step 2/2. The protein operates within nucleotide-sugar biosynthesis; UDP-N-acetyl-alpha-D-glucosamine biosynthesis; UDP-N-acetyl-alpha-D-glucosamine from N-acetyl-alpha-D-glucosamine 1-phosphate: step 1/1. It functions in the pathway bacterial outer membrane biogenesis; LPS lipid A biosynthesis. Catalyzes the last two sequential reactions in the de novo biosynthetic pathway for UDP-N-acetylglucosamine (UDP-GlcNAc). The C-terminal domain catalyzes the transfer of acetyl group from acetyl coenzyme A to glucosamine-1-phosphate (GlcN-1-P) to produce N-acetylglucosamine-1-phosphate (GlcNAc-1-P), which is converted into UDP-GlcNAc by the transfer of uridine 5-monophosphate (from uridine 5-triphosphate), a reaction catalyzed by the N-terminal domain. The polypeptide is Bifunctional protein GlmU (Burkholderia thailandensis (strain ATCC 700388 / DSM 13276 / CCUG 48851 / CIP 106301 / E264)).